We begin with the raw amino-acid sequence, 596 residues long: MRLRSQKRGNKFVALPAKTRKGKGKKLKPKNLTITKKDEVKKIKKTITPKPNNIDEDDGIGEVDDIMDITPNYQGNNDGNELDLQQTPIIPNEIKDLFMGDNWRKISGPHAVSIITKPQHRRYIALKGTMGTGKTHVTVESLNKITGSTGSILLIVGRKELANEIERRINGSCKVYNYLEKEEFSNGISLSRGGLLTERCVFIVCVNSITTDLFKEDGFKTDMIVVDEVETTFMNIVSESLMTYSAAIETRNTLVEKLFPYTNVLLTIDAALAEPMVVGCAKMFGGKFEEYKLDLVRIRPPIYHRAVQCSTAYNIIDHNPLEKRYDTLFNAITYHVYELGKRIVISVPYHKTALQLKRHILAARPQHFHKIPHVVVYTAKTRDARLARIKALQTGEQYGIEALAKEADVFIFNSCMSAGHSLNMDGYEACFSYFLINHMTCSVMEQLQMTARLRNNNSKTLYWGLMNTMNDPLRGIRDIEELKTYSTMMRKFGKWMGSSFDNGIKGFKILLKMAYPNIVFEKGVVKSREYPYKNNEIINQTMQNDASVLRKLFINPEPSKWRFVTQEHEALYGKDLPPRQFNYYSTLSGLYNVVLS.

2 stretches are compositionally biased toward basic residues: residues 1–10 (MRLRSQKRGN) and 18–29 (KTRKGKGKKLKP). The tract at residues 1 to 30 (MRLRSQKRGNKFVALPAKTRKGKGKKLKPK) is disordered.

This is an uncharacterized protein from Magallana gigas (Pacific oyster).